The sequence spans 110 residues: Integration host factor subunit alpha (110 aa).

The protein belongs to the bacterial histone-like protein family. As to quaternary structure, heterodimer of an alpha and a beta chain.

Its function is as follows. This protein is one of the two subunits of integration host factor, a specific DNA-binding protein that functions in genetic recombination as well as in transcriptional and translational control. The polypeptide is Integration host factor subunit alpha (Methylococcus capsulatus (strain ATCC 33009 / NCIMB 11132 / Bath)).